Here is a 220-residue protein sequence, read N- to C-terminus: 3-dehydroquinate dehydratase (220 aa).

Residues Ser8, 30–32, and Arg63 contribute to the 3-dehydroquinate site; that span reads ELR. His114 serves as the catalytic Proton donor/acceptor. Residue Lys140 is the Schiff-base intermediate with substrate of the active site. 2 residues coordinate 3-dehydroquinate: Arg174 and Gln197.

This sequence belongs to the type-I 3-dehydroquinase family. Homodimer.

The catalysed reaction is 3-dehydroquinate = 3-dehydroshikimate + H2O. It functions in the pathway metabolic intermediate biosynthesis; chorismate biosynthesis; chorismate from D-erythrose 4-phosphate and phosphoenolpyruvate: step 3/7. In terms of biological role, involved in the third step of the chorismate pathway, which leads to the biosynthesis of aromatic amino acids. Catalyzes the cis-dehydration of 3-dehydroquinate (DHQ) and introduces the first double bond of the aromatic ring to yield 3-dehydroshikimate. The polypeptide is 3-dehydroquinate dehydratase (Saccharolobus solfataricus (strain ATCC 35092 / DSM 1617 / JCM 11322 / P2) (Sulfolobus solfataricus)).